The primary structure comprises 361 residues: tRNA/tmRNA (uracil-C(5))-methyltransferase (361 aa).

S-adenosyl-L-methionine is bound by residues Gln183, Tyr211, Asn216, Glu232, and Asp294. Residue Cys319 is the Nucleophile of the active site. The active-site Proton acceptor is the Glu353.

It belongs to the class I-like SAM-binding methyltransferase superfamily. RNA M5U methyltransferase family. TrmA subfamily.

The catalysed reaction is uridine(54) in tRNA + S-adenosyl-L-methionine = 5-methyluridine(54) in tRNA + S-adenosyl-L-homocysteine + H(+). It carries out the reaction uridine(341) in tmRNA + S-adenosyl-L-methionine = 5-methyluridine(341) in tmRNA + S-adenosyl-L-homocysteine + H(+). In terms of biological role, dual-specificity methyltransferase that catalyzes the formation of 5-methyluridine at position 54 (m5U54) in all tRNAs, and that of position 341 (m5U341) in tmRNA (transfer-mRNA). The protein is tRNA/tmRNA (uracil-C(5))-methyltransferase of Acinetobacter baumannii (strain AYE).